The primary structure comprises 124 residues: T cell receptor beta variable 13 (124 aa).

An N-terminal signal peptide occupies residues 1-31 (MLSPDLPDSAWNTRLLCRVMLCLLGAGSVAA). The Ig-like domain occupies 32–124 (GVIQSPRHLI…SALYFCASSL (93 aa)). Cys52 and Cys120 form a disulfide bridge. Residue Asn106 is glycosylated (N-linked (GlcNAc...) asparagine).

In terms of assembly, alpha-beta TR is a heterodimer composed of an alpha and beta chain; disulfide-linked. The alpha-beta TR is associated with the transmembrane signaling CD3 coreceptor proteins to form the TR-CD3 (TcR or TCR). The assembly of alpha-beta TR heterodimers with CD3 occurs in the endoplasmic reticulum where a single alpha-beta TR heterodimer associates with one CD3D-CD3E heterodimer, one CD3G-CD3E heterodimer and one CD247 homodimer forming a stable octameric structure. CD3D-CD3E and CD3G-CD3E heterodimers preferentially associate with TR alpha and TR beta chains, respectively. The association of the CD247 homodimer is the last step of TcR assembly in the endoplasmic reticulum and is required for transport to the cell surface.

It localises to the cell membrane. In terms of biological role, v region of the variable domain of T cell receptor (TR) beta chain that participates in the antigen recognition. Alpha-beta T cell receptors are antigen specific receptors which are essential to the immune response and are present on the cell surface of T lymphocytes. Recognize peptide-major histocompatibility (MH) (pMH) complexes that are displayed by antigen presenting cells (APC), a prerequisite for efficient T cell adaptive immunity against pathogens. Binding of alpha-beta TR to pMH complex initiates TR-CD3 clustering on the cell surface and intracellular activation of LCK that phosphorylates the ITAM motifs of CD3G, CD3D, CD3E and CD247 enabling the recruitment of ZAP70. In turn ZAP70 phosphorylates LAT, which recruits numerous signaling molecules to form the LAT signalosome. The LAT signalosome propagates signal branching to three major signaling pathways, the calcium, the mitogen-activated protein kinase (MAPK) kinase and the nuclear factor NF-kappa-B (NF-kB) pathways, leading to the mobilization of transcription factors that are critical for gene expression and essential for T cell growth and differentiation. The T cell repertoire is generated in the thymus, by V-(D)-J rearrangement. This repertoire is then shaped by intrathymic selection events to generate a peripheral T cell pool of self-MH restricted, non-autoaggressive T cells. Post-thymic interaction of alpha-beta TR with the pMH complexes shapes TR structural and functional avidity. The polypeptide is T cell receptor beta variable 13 (Homo sapiens (Human)).